The sequence spans 30 residues: Cycloviolacin-O20 (30 aa).

The segment at residues 1 to 30 (GIPCGESCVWIPCLTSAIGCSCKSKVCYRD) is a cross-link (cyclopeptide (Gly-Asp)). Intrachain disulfides connect C4–C20, C8–C22, and C13–C27.

This is a cyclic peptide.

Its function is as follows. Probably participates in a plant defense mechanism. In Viola odorata (Sweet violet), this protein is Cycloviolacin-O20.